Here is a 542-residue protein sequence, read N- to C-terminus: Chaperonin GroEL (542 aa).

Residues 29–32 (TLGP), 86–90 (DGTTT), glycine 413, 476–478 (NAA), and aspartate 492 each bind ATP.

Belongs to the chaperonin (HSP60) family. Forms a cylinder of 14 subunits composed of two heptameric rings stacked back-to-back. Interacts with the co-chaperonin GroES.

The protein localises to the cytoplasm. The catalysed reaction is ATP + H2O + a folded polypeptide = ADP + phosphate + an unfolded polypeptide.. Functionally, together with its co-chaperonin GroES, plays an essential role in assisting protein folding. The GroEL-GroES system forms a nano-cage that allows encapsulation of the non-native substrate proteins and provides a physical environment optimized to promote and accelerate protein folding. The polypeptide is Chaperonin GroEL (Streptococcus mutans serotype c (strain ATCC 700610 / UA159)).